The chain runs to 307 residues: Putative lipid kinase SERP0390 (307 aa).

The DAGKc domain occupies 3 to 139; the sequence is QPYNHGVLFY…YDVLKVNDLY (137 aa). ATP contacts are provided by residues Ser-44, 74–80, and Thr-101; that span reads GDGTLNE. 3 residues coordinate Mg(2+): Ser-220, Asp-223, and Arg-225. The active-site Proton acceptor is Glu-281.

It belongs to the diacylglycerol/lipid kinase family. It depends on Mg(2+) as a cofactor.

Its function is as follows. May catalyze the ATP-dependent phosphorylation of lipids other than diacylglycerol (DAG). In Staphylococcus epidermidis (strain ATCC 35984 / DSM 28319 / BCRC 17069 / CCUG 31568 / BM 3577 / RP62A), this protein is Putative lipid kinase SERP0390.